The primary structure comprises 156 residues: Arginine repressor (156 aa).

The protein belongs to the ArgR family.

It is found in the cytoplasm. The protein operates within amino-acid biosynthesis; L-arginine biosynthesis [regulation]. Functionally, regulates arginine biosynthesis genes. This chain is Arginine repressor, found in Shewanella baltica (strain OS223).